A 615-amino-acid polypeptide reads, in one-letter code: ATP-dependent zinc metalloprotease FtsH 2 (615 aa).

The Cytoplasmic segment spans residues 1–7; it reads MNEPNRN. A helical membrane pass occupies residues 8–28; that stretch reads FFWIFFLILGIFWLQSVWFGS. Over 29 to 99 the chain is Periplasmic; sequence RTVQQIPYSQ…VTYRREIENT (71 aa). The chain crosses the membrane as a helical span at residues 100-120; that stretch reads FFRDLLSWVVPALIFVAVFLY. The Cytoplasmic segment spans residues 121-615; sequence FSRKFAEKGG…APQRERDLSV (495 aa). Residue 195 to 202 coordinates ATP; that stretch reads GPPGTGKT. His-418 serves as a coordination point for Zn(2+). Residue Glu-419 is part of the active site. Residues His-422 and Asp-495 each coordinate Zn(2+).

The protein in the central section; belongs to the AAA ATPase family. In the C-terminal section; belongs to the peptidase M41 family. As to quaternary structure, homohexamer. It depends on Zn(2+) as a cofactor.

It is found in the cell inner membrane. In terms of biological role, acts as a processive, ATP-dependent zinc metallopeptidase for both cytoplasmic and membrane proteins. Plays a role in the quality control of integral membrane proteins. The protein is ATP-dependent zinc metalloprotease FtsH 2 of Bdellovibrio bacteriovorus (strain ATCC 15356 / DSM 50701 / NCIMB 9529 / HD100).